Here is a 599-residue protein sequence, read N- to C-terminus: DNA primase (599 aa).

The CHC2-type zinc-finger motif lies at 38 to 62 (CPFHDEKTPSFTVSEDKQICHCFGC). In terms of domain architecture, Toprim spans 260–341 (DEIVLLEGFM…NVFVIQLPSG (82 aa)). Glu-266, Asp-310, and Asp-312 together coordinate Mg(2+).

This sequence belongs to the DnaG primase family. In terms of assembly, monomer. Interacts with DnaB. Zn(2+) serves as cofactor. The cofactor is Mg(2+).

The enzyme catalyses ssDNA + n NTP = ssDNA/pppN(pN)n-1 hybrid + (n-1) diphosphate.. Functionally, RNA polymerase that catalyzes the synthesis of short RNA molecules used as primers for DNA polymerase during DNA replication. The sequence is that of DNA primase from Staphylococcus aureus (strain COL).